The primary structure comprises 257 residues: MLAKRIVPCLDVRDGQVVKGVQFRNHEIIGDIVPLAKRYAEEGADELVFYDITASSDGRVVDKSWVARVAEVIDIPFCVAGGIKSVEDASRILQFGADKVSINSPALANPALITELADKFGVQCIVVGIDSYFDAETGKYQVYQFTGDESRTKATQWETRDWVLEVQKRGAGEIVLNMMNQDGVRNGYDLKQLNMVREVCHVPLIASGGAGEMVHFADAYQKANVDGALAASVFHKQIINIGELKQYLKEQNVEIRL.

Residues D11 and D130 contribute to the active site.

Belongs to the HisA/HisF family. In terms of assembly, heterodimer of HisH and HisF.

It is found in the cytoplasm. The enzyme catalyses 5-[(5-phospho-1-deoxy-D-ribulos-1-ylimino)methylamino]-1-(5-phospho-beta-D-ribosyl)imidazole-4-carboxamide + L-glutamine = D-erythro-1-(imidazol-4-yl)glycerol 3-phosphate + 5-amino-1-(5-phospho-beta-D-ribosyl)imidazole-4-carboxamide + L-glutamate + H(+). It participates in amino-acid biosynthesis; L-histidine biosynthesis; L-histidine from 5-phospho-alpha-D-ribose 1-diphosphate: step 5/9. Functionally, IGPS catalyzes the conversion of PRFAR and glutamine to IGP, AICAR and glutamate. The HisF subunit catalyzes the cyclization activity that produces IGP and AICAR from PRFAR using the ammonia provided by the HisH subunit. This Photobacterium profundum (strain SS9) protein is Imidazole glycerol phosphate synthase subunit HisF.